The primary structure comprises 626 residues: PEX5-related protein (626 aa).

3 disordered regions span residues 1–20 (MYQGHMQKSKEQGYGKLSSD), 118–167 (VSQT…SSLD), and 181–235 (KFHG…ASEL). Basic and acidic residues predominate over residues 181-198 (KFHGDRNTKGHPMAERKS). A Phosphoserine modification is found at serine 205. The segment covering 225–235 (SALNSESASEL) has biased composition (low complexity). Phosphoserine occurs at positions 253, 257, and 261. TPR repeat units follow at residues 326–359 (WPGAFEEGLKRLKEGDLPVTILFMEAAILQDPGD), 360–393 (AEAWQFLGITQAENENEQAAIVALQRCLELQPNN), and 395–427 (KALMALAVSYTNTGHQQDACDALKNWIKQNPKY). Residues serine 445 and serine 447 each carry the phosphoserine modification. TPR repeat units follow at residues 474 to 507 (PDLQTGLGVLFHLSGEFNRAIDAFNAALTVRPED), 509 to 541 (SLWNRLGATLANGDRSEEAVEAYTRALEIQPGF), and 543 to 575 (RSRYNLGISCINLGAYREAVSNFLTALSLQRKS).

The protein belongs to the peroxisomal targeting signal receptor family. In terms of assembly, interacts with RAB8B. Forms an obligate 4:4 complex with HCN2. May interact with the C-terminal PTS1-type tripeptide peroxisomal targeting signal (SKL-type); the relevance of such interaction is however unclear. Interacts with HCN3. Interacts with HCN4 with a 4:4 HCN4:PEX5L stoichiometry; reduces the effects of cAMP on the voltage-dependence and rate of activation of HCN4. As to expression, mainly expressed in brain. Also expressed in pancreas, testis and pituitary.

The protein localises to the cytoplasm. Its subcellular location is the membrane. Accessory subunit of hyperpolarization-activated cyclic nucleotide-gated (HCN) channels, regulating their cell-surface expression and cyclic nucleotide dependence. This is PEX5-related protein (PEX5L) from Homo sapiens (Human).